The sequence spans 150 residues: Large ribosomal subunit protein uL11 (150 aa).

Belongs to the universal ribosomal protein uL11 family. Part of the ribosomal stalk of the 50S ribosomal subunit. Interacts with L10 and the large rRNA to form the base of the stalk. L10 forms an elongated spine to which L12 dimers bind in a sequential fashion forming a multimeric L10(L12)X complex. One or more lysine residues are methylated.

Forms part of the ribosomal stalk which helps the ribosome interact with GTP-bound translation factors. The chain is Large ribosomal subunit protein uL11 from Cereibacter sphaeroides (strain ATCC 17025 / ATH 2.4.3) (Rhodobacter sphaeroides).